Consider the following 1403-residue polypeptide: DNA-directed RNA polymerase subunit beta' (1403 aa).

Positions 71, 73, 86, and 89 each coordinate Zn(2+). 3 residues coordinate Mg(2+): Asp462, Asp464, and Asp466. Positions 811, 885, 892, and 895 each coordinate Zn(2+).

It belongs to the RNA polymerase beta' chain family. In terms of assembly, the RNAP catalytic core consists of 2 alpha, 1 beta, 1 beta' and 1 omega subunit. When a sigma factor is associated with the core the holoenzyme is formed, which can initiate transcription. Mg(2+) is required as a cofactor. Requires Zn(2+) as cofactor.

The catalysed reaction is RNA(n) + a ribonucleoside 5'-triphosphate = RNA(n+1) + diphosphate. DNA-dependent RNA polymerase catalyzes the transcription of DNA into RNA using the four ribonucleoside triphosphates as substrates. The chain is DNA-directed RNA polymerase subunit beta' from Bartonella tribocorum (strain CIP 105476 / IBS 506).